The primary structure comprises 131 residues: Predicted GPI-anchored protein 26 (131 aa).

Residues 1 to 18 (MHFSKIIAGSALSSVALA) form the signal peptide. 2 N-linked (GlcNAc...) asparagine glycosylation sites follow: asparagine 22 and asparagine 104. The GPI-anchor amidated glycine moiety is linked to residue glycine 110. The propeptide at 111 to 131 (AGSKNVASALVGVVAIAAAMM) is removed in mature form.

The protein localises to the cell membrane. GPI-anchored protein involved in proper cell wall integrity. Does not seem to be directly involved in the synthesis of the cell wall. Required for normal virulence in a mouse model of disseminated candidiasis. In Candida albicans (strain SC5314 / ATCC MYA-2876) (Yeast), this protein is Predicted GPI-anchored protein 26 (PGA26).